The following is a 1024-amino-acid chain: Probable serine/threonine-protein kinase DDB_G0271682 (1024 aa).

The disordered stretch occupies residues 187-261; it reads NIDNNNNNNN…RDNENNHNHQ (75 aa). Over residues 190–244 the composition is skewed to low complexity; that stretch reads NNNNNNNNNNNNNNNNNNNNNNNNNNNNNNNNNNNNNNNNNNNNNNNNNNNNNNN. A compositionally biased stretch (basic and acidic residues) spans 250-261; the sequence is RSRDNENNHNHQ. 2 Protein kinase domains span residues 360–609 and 645–1018; these read LLFI…LKLM and ILVT…ELLI. Residues 366–374 and K387 contribute to the ATP site; that span reads IGSGACGEV. D484 serves as the catalytic Proton acceptor. Residues 651–659 and K719 each bind ATP; that span reads VGGNVSGNV. Composition is skewed to low complexity over residues 823 to 851 and 862 to 874; these read NNNSNQNNNNNNNNNNNNNNNNNNNNNNN and ENTNTTTTTTTTT. The tract at residues 823-874 is disordered; sequence NNNSNQNNNNNNNNNNNNNNNNNNNNNNNKKNDGGDDNGENTNTTTTTTTTT.

This sequence belongs to the protein kinase superfamily. TKL Ser/Thr protein kinase family.

The enzyme catalyses L-seryl-[protein] + ATP = O-phospho-L-seryl-[protein] + ADP + H(+). It carries out the reaction L-threonyl-[protein] + ATP = O-phospho-L-threonyl-[protein] + ADP + H(+). This is Probable serine/threonine-protein kinase DDB_G0271682 from Dictyostelium discoideum (Social amoeba).